Reading from the N-terminus, the 69-residue chain is Putative membrane protein insertion efficiency factor (69 aa).

It belongs to the UPF0161 family.

It is found in the cell inner membrane. In terms of biological role, could be involved in insertion of integral membrane proteins into the membrane. The chain is Putative membrane protein insertion efficiency factor from Azoarcus sp. (strain BH72).